A 226-amino-acid chain; its full sequence is ATP synthase subunit a (226 aa).

6 helical membrane passes run 17-37, 79-99, 105-125, 134-154, 176-196, and 199-219; these read FSYF…AMMA, LVAT…IPGF, SLNL…FEGI, FAHF…IEIV, LFLM…AYVL, and FMAF…LAGA.

Belongs to the ATPase A chain family. As to quaternary structure, F-type ATPases have 2 components, CF(1) - the catalytic core - and CF(0) - the membrane proton channel. CF(1) has five subunits: alpha(3), beta(3), gamma(1), delta(1), epsilon(1). CF(0) has three main subunits: a(1), b(2) and c(9-12). The alpha and beta chains form an alternating ring which encloses part of the gamma chain. CF(1) is attached to CF(0) by a central stalk formed by the gamma and epsilon chains, while a peripheral stalk is formed by the delta and b chains.

Its subcellular location is the cell inner membrane. Functionally, key component of the proton channel; it plays a direct role in the translocation of protons across the membrane. The sequence is that of ATP synthase subunit a from Campylobacter jejuni subsp. jejuni serotype O:23/36 (strain 81-176).